The following is a 397-amino-acid chain: Ribosomal RNA large subunit methyltransferase I (397 aa).

The region spanning 2-81 (SAQVILQPSR…ESIDNGFFLR (80 aa)) is the PUA domain.

It belongs to the methyltransferase superfamily. RlmI family.

It localises to the cytoplasm. It catalyses the reaction cytidine(1962) in 23S rRNA + S-adenosyl-L-methionine = 5-methylcytidine(1962) in 23S rRNA + S-adenosyl-L-homocysteine + H(+). Specifically methylates the cytosine at position 1962 (m5C1962) of 23S rRNA. The chain is Ribosomal RNA large subunit methyltransferase I from Alteromonas mediterranea (strain DSM 17117 / CIP 110805 / LMG 28347 / Deep ecotype).